A 694-amino-acid polypeptide reads, in one-letter code: Beta-galactosidase (694 aa).

The segment at 1–31 (MGKRFPSGWFSPRVHPPRRQRSPMTNQATPG) is disordered. The span at 22 to 31 (SPMTNQATPG) shows a compositional bias: polar residues. Substrate contacts are provided by R144 and N182. E183 (proton donor) is an active-site residue. The active-site Nucleophile is the E341. Substrate contacts are provided by residues W349 and 389–392 (EKFH).

Belongs to the glycosyl hydrolase 42 family. As to quaternary structure, homotrimer.

The enzyme catalyses Hydrolysis of terminal non-reducing beta-D-galactose residues in beta-D-galactosides.. Its activity is regulated as follows. Strongly inhibited by glucose. No activity is lost during treatment with 100 mM EDTA after 2 hours. Activity not considerably affected by metal ions (5 mM), including Na(+), K(+), Mg(2+), Co(2+) and Ca(2+). Completely inhibited by Cu(2+) and Zn(2+) (5 mM) and is strongly inhibited by Mn(2+) (11%), Fe(2+) (25%) and Ni(2+) (38%) in comparison with the activity in the absence of cations (100%). Activity not affected by dithiothreitol, beta-mercaptoethanol and L-cysteine whereas reduced glutathione almost completely inactivates it. With ONPG as substrate, the addition of ethanol up to 20% still slightly stimulates activity. The activity increases up to 120% in the presence of 8% v/v ethanol at pH 5.5. In terms of biological role, hydrolyzes p-nitrophenyl-beta-D-galactopyranoside (PNPG), o-nitrophenyl-beta-D-galactopyranoside (ONPG) and chromogen 5-bromo-4-chloro-3-indolyl-beta-D-galactopyranoside (X-gal), with highest activity against PNPG. Also acts on p-nitrophenyl-beta-D-glucopyranoside (PNPGlu) and o-nitrophenyl-beta-D-glucopyranoside (ONPGlu), but with significantly lower activity. This is Beta-galactosidase from Arthrobacter sp.